The following is a 305-amino-acid chain: Coenzyme PQQ synthesis protein B (305 aa).

It belongs to the PqqB family.

It functions in the pathway cofactor biosynthesis; pyrroloquinoline quinone biosynthesis. Functionally, may be involved in the transport of PQQ or its precursor to the periplasm. This chain is Coenzyme PQQ synthesis protein B, found in Methylobacillus flagellatus (strain ATCC 51484 / DSM 6875 / VKM B-1610 / KT).